Reading from the N-terminus, the 402-residue chain is B box and SPRY domain-containing protein (402 aa).

The disordered stretch occupies residues 1–20; it reads MSAEGAEPGPGSGSGPGPGP. The segment at 17-65 adopts a B box-type zinc-finger fold; it reads GPGPLCPEHGQALSWFCGSERRPVCAACAGLGGRCRGHRIRRAEERAEE. One can recognise a B30.2/SPRY domain in the interval 212 to 402; sequence PLLTQLWATA…VADQTISIVR (191 aa).

As to quaternary structure, interacts with TRPV5 and TRPV6. Interacts with YWHAZ/14-3-3 protein zeta.

It localises to the cytoplasm. Its subcellular location is the membrane. Functionally, may regulate epithelial calcium transport by inhibiting TRPV5 activity. This chain is B box and SPRY domain-containing protein (BSPRY), found in Homo sapiens (Human).